The following is a 445-amino-acid chain: tRNA-2-methylthio-N(6)-dimethylallyladenosine synthase (445 aa).

In terms of domain architecture, MTTase N-terminal spans Lys-3–Arg-124. Residues Cys-12, Cys-48, Cys-87, Cys-162, Cys-166, and Cys-169 each contribute to the [4Fe-4S] cluster site. The Radical SAM core domain occupies Tyr-148–Ala-380. The 63-residue stretch at Thr-383–Leu-445 folds into the TRAM domain.

The protein belongs to the methylthiotransferase family. MiaB subfamily. As to quaternary structure, monomer. It depends on [4Fe-4S] cluster as a cofactor.

It is found in the cytoplasm. It catalyses the reaction N(6)-dimethylallyladenosine(37) in tRNA + (sulfur carrier)-SH + AH2 + 2 S-adenosyl-L-methionine = 2-methylsulfanyl-N(6)-dimethylallyladenosine(37) in tRNA + (sulfur carrier)-H + 5'-deoxyadenosine + L-methionine + A + S-adenosyl-L-homocysteine + 2 H(+). Its function is as follows. Catalyzes the methylthiolation of N6-(dimethylallyl)adenosine (i(6)A), leading to the formation of 2-methylthio-N6-(dimethylallyl)adenosine (ms(2)i(6)A) at position 37 in tRNAs that read codons beginning with uridine. The polypeptide is tRNA-2-methylthio-N(6)-dimethylallyladenosine synthase (Rickettsia conorii (strain ATCC VR-613 / Malish 7)).